The following is a 150-amino-acid chain: Large ribosomal subunit protein bL9 (150 aa).

This sequence belongs to the bacterial ribosomal protein bL9 family.

In terms of biological role, binds to the 23S rRNA. The polypeptide is Large ribosomal subunit protein bL9 (Albidiferax ferrireducens (strain ATCC BAA-621 / DSM 15236 / T118) (Rhodoferax ferrireducens)).